The chain runs to 335 residues: Zinc transporter ZIP11 (335 aa).

Transmembrane regions (helical) follow at residues 12–32 (LLGT…VFIF), 44–64 (LGFA…APAV), 72–92 (GFGA…AAFV), 187–207 (IALL…AVGV), 256–278 (FWYG…FAVV), 283–300 (VLPY…YVVM), and 315–335 (LASW…VGLG).

Belongs to the ZIP transporter (TC 2.A.5) family.

Its subcellular location is the cell membrane. The protein resides in the nucleus. The protein localises to the cytoplasm. It localises to the golgi apparatus. It carries out the reaction Zn(2+)(in) = Zn(2+)(out). The enzyme catalyses Cu(2+)(in) = Cu(2+)(out). Functionally, zinc importer that regulates cytosolic zinc concentrations either via zinc influx from the extracellular compartment or efflux from intracellular organelles such as Golgi apparatus. May transport copper ions as well. The transport mechanism remains to be elucidated. The polypeptide is Zinc transporter ZIP11 (Slc39a11) (Rattus norvegicus (Rat)).